The chain runs to 195 residues: O-methyltransferase (195 aa).

Belongs to the methyltransferase superfamily.

It participates in secondary metabolite biosynthesis. Functionally, O-methyltransferase; part of the gene cluster that mediates the biosynthesis of pyrophen and campyrone B, which represent a class of fungal amino acid-derived alpha-pyrone natural products. The first step of pyrophen biosynthesis is catalyzed by the PKS-NRPS hybrid synthetase ATPKS that uptakes and condensates L-phenylalanine and malonyl-CoA in order to produce desmethyldesacetylpyrophen. Although the A domain does not discriminate between 2 enantiomeric phenylalanines, the downstream KS domain must play a gate keeping role to stereoselectively accept the L-phenylalanyl-S-phosphopantetheine (Ppant)-T domain intermediate for chain elongation. The resulting amino acid derived diketide is off-loaded through lactonization to yield the alpha-pyrone intermediate desmethyldesacetylpyrophen. The cluster-specific O-methyltransferase (OMT) then methylates desmethyldesacetylpyrophen to desacetylpyrophen, which is further acetylated to pyrophen by an endogenous yet unidentified N-acetyltransferase. ATPKS has relaxed substrate specificity to activate and extend branched-chain amino acid L-leucine to produce small amounts of campyrone B. The sequence is that of O-methyltransferase from Aspergillus niger (strain ATCC 1015 / CBS 113.46 / FGSC A1144 / LSHB Ac4 / NCTC 3858a / NRRL 328 / USDA 3528.7).